A 289-amino-acid chain; its full sequence is Diacylglycerol pyrophosphate phosphatase 1 (289 aa).

The Vacuolar segment spans residues 1–21 (MNRVSFIKTPFNIGAKWRLED). Residues 22-42 (VFLLIIMILLNYPVYYQQPFE) traverse the membrane as a helical segment. The Cytoplasmic portion of the chain corresponds to 43–65 (RQFYINDLTISHPYATTERVNNN). Residues 66 to 86 (MLFVYSFVVPSLTILIIGSIL) form a helical membrane-spanning segment. Residues 87 to 92 (ADRRHL) lie on the Vacuolar side of the membrane. Residues 93 to 113 (IFILYTSLLGLSLAWFSTSFF) traverse the membrane as a helical segment. At 114 to 172 (TNFIKNWIGRLRPDFLDRCQPVEGLPLDTLFTAKDVCTTKNHERLLDGFRTTPSGHSSE) the chain is on the cytoplasmic side. Residues 118–126 (KNWIGRLRP) form a phosphatase sequence motif I region. The phosphatase sequence motif II stretch occupies residues 166–169 (PSGH). 2 consecutive transmembrane segments (helical) span residues 173-193 (SFAG…TESP) and 194-214 (LMPL…ALIA). The Cytoplasmic portion of the chain corresponds to 215–222 (LSRTQDYR). The segment at 216–227 (SRTQDYRHHFVD) is phosphatase sequence motif III. A helical transmembrane segment spans residues 223-243 (HHFVDVILGSMLGYIMAHFFY). Residues 244-289 (RRIFPPIDDPLPFKPLMDDSDVTLEEAVTHQRIPDEELHPLSDEGM) lie on the Vacuolar side of the membrane. Ser285 carries the post-translational modification Phosphoserine.

This sequence belongs to the PA-phosphatase related phosphoesterase family.

The protein resides in the vacuole membrane. It catalyses the reaction a 1,2-diacyl-sn-glycerol 3-diphosphate + H2O = a 1,2-diacyl-sn-glycero-3-phosphate + phosphate + H(+). The catalysed reaction is a 1,2-diacyl-sn-glycero-3-phosphate + H2O = a 1,2-diacyl-sn-glycerol + phosphate. The enzyme catalyses a 1-acyl-sn-glycero-3-phosphate + H2O = a 1-acyl-sn-glycerol + phosphate. Inhibited by sodium fluoride (NaF) and pyrophosphate. Strongly inhibited by manganese ion and, to a lower extent, by magnesium and calcium ions. Also inhibited by Cu(2+) ion. In an indirect manner, it is also inhibited by the zinc ion which is able to form a complex with DGPP and prevent the enzyme from removing the phosphate from the substrate. Not inhibited by N-ethylmaleimide. In terms of biological role, catalyzes the dephosphorylation of diacylglycerol diphosphate (DGPP) to phosphatidate (PA) and the subsequent dephosphorylation of PA to diacylglycerol (DAG). Together with LPP1, regulates intracellular DGPP and PA levels, which are phospholipid molecules believed to play a signaling role in stress response. Can also use lysophosphatidic acid (LPA) and phosphatidylglycerophosphate as substrates. Substrate preference is DGPP &gt; LPA &gt; PA. Activity is independent of a divalent cation ion and insensitive to inhibition by N-ethylmaleimide. The protein is Diacylglycerol pyrophosphate phosphatase 1 (DPP1) of Saccharomyces cerevisiae (strain ATCC 204508 / S288c) (Baker's yeast).